Reading from the N-terminus, the 208-residue chain is Large ribosomal subunit protein uL3 (208 aa).

The segment at 130-168 (GGSKTHGQSDRLRAPGSVGGSSFPSRTFKGQRMAGRKGS) is disordered.

It belongs to the universal ribosomal protein uL3 family. Part of the 50S ribosomal subunit. Forms a cluster with proteins L14 and L19.

Its function is as follows. One of the primary rRNA binding proteins, it binds directly near the 3'-end of the 23S rRNA, where it nucleates assembly of the 50S subunit. In Chloroherpeton thalassium (strain ATCC 35110 / GB-78), this protein is Large ribosomal subunit protein uL3.